We begin with the raw amino-acid sequence, 209 residues long: GTP cyclohydrolase-2 (209 aa).

49–53 (RIHSE) contributes to the GTP binding site. Zn(2+) contacts are provided by C54, C65, and C67. GTP is bound by residues Q70, 92-94 (EGR), and T114. D126 (proton acceptor) is an active-site residue. R128 acts as the Nucleophile in catalysis. Positions 149 and 154 each coordinate GTP.

Belongs to the GTP cyclohydrolase II family. Requires Zn(2+) as cofactor.

It catalyses the reaction GTP + 4 H2O = 2,5-diamino-6-hydroxy-4-(5-phosphoribosylamino)-pyrimidine + formate + 2 phosphate + 3 H(+). The protein operates within cofactor biosynthesis; riboflavin biosynthesis; 5-amino-6-(D-ribitylamino)uracil from GTP: step 1/4. Its function is as follows. Catalyzes the conversion of GTP to 2,5-diamino-6-ribosylamino-4(3H)-pyrimidinone 5'-phosphate (DARP), formate and pyrophosphate. This Shewanella halifaxensis (strain HAW-EB4) protein is GTP cyclohydrolase-2.